Reading from the N-terminus, the 557-residue chain is Tryptophan 2-monooxygenase (557 aa).

Residues serine 49, glutamate 69, arginine 71, arginine 77, and arginine 98 each coordinate FMN. Arginine 98 contributes to the substrate binding site.

The protein belongs to the tryptophan 2-monooxygenase family. As to quaternary structure, monomer. It depends on FMN as a cofactor.

The enzyme catalyses L-tryptophan + O2 = indole-3-acetamide + CO2 + H2O. Its pathway is plant hormone metabolism; auxin biosynthesis. The protein is Tryptophan 2-monooxygenase (iaaM) of Pseudomonas savastanoi (Pseudomonas syringae pv. savastanoi).